Here is a 96-residue protein sequence, read N- to C-terminus: Integration host factor subunit beta (96 aa).

This sequence belongs to the bacterial histone-like protein family. As to quaternary structure, heterodimer of an alpha and a beta chain.

This protein is one of the two subunits of integration host factor, a specific DNA-binding protein that functions in genetic recombination as well as in transcriptional and translational control. The protein is Integration host factor subunit beta of Dichelobacter nodosus (strain VCS1703A).